The sequence spans 171 residues: 3-hydroxydecanoyl-[acyl-carrier-protein] dehydratase (171 aa).

The active site involves histidine 70.

It belongs to the thioester dehydratase family. FabA subfamily. Homodimer.

The protein resides in the cytoplasm. The catalysed reaction is a (3R)-hydroxyacyl-[ACP] = a (2E)-enoyl-[ACP] + H2O. The enzyme catalyses (3R)-hydroxydecanoyl-[ACP] = (2E)-decenoyl-[ACP] + H2O. It carries out the reaction (2E)-decenoyl-[ACP] = (3Z)-decenoyl-[ACP]. It functions in the pathway lipid metabolism; fatty acid biosynthesis. Its function is as follows. Necessary for the introduction of cis unsaturation into fatty acids. Catalyzes the dehydration of (3R)-3-hydroxydecanoyl-ACP to E-(2)-decenoyl-ACP and then its isomerization to Z-(3)-decenoyl-ACP. Can catalyze the dehydratase reaction for beta-hydroxyacyl-ACPs with saturated chain lengths up to 16:0, being most active on intermediate chain length. This Shewanella denitrificans (strain OS217 / ATCC BAA-1090 / DSM 15013) protein is 3-hydroxydecanoyl-[acyl-carrier-protein] dehydratase.